Consider the following 148-residue polypeptide: Urease accessory protein UreE (148 aa).

This sequence belongs to the UreE family.

It localises to the cytoplasm. In terms of biological role, involved in urease metallocenter assembly. Binds nickel. Probably functions as a nickel donor during metallocenter assembly. This is Urease accessory protein UreE from Nostoc punctiforme (strain ATCC 29133 / PCC 73102).